Here is a 116-residue protein sequence, read N- to C-terminus: Large ribosomal subunit protein uL18 (116 aa).

It belongs to the universal ribosomal protein uL18 family. Part of the 50S ribosomal subunit; part of the 5S rRNA/L5/L18/L25 subcomplex. Contacts the 5S and 23S rRNAs.

This is one of the proteins that bind and probably mediate the attachment of the 5S RNA into the large ribosomal subunit, where it forms part of the central protuberance. The sequence is that of Large ribosomal subunit protein uL18 from Shewanella denitrificans (strain OS217 / ATCC BAA-1090 / DSM 15013).